The following is a 93-amino-acid chain: MARDTAILRVTGFVQGVGFRYTTKHVAYKYDVSGTVKNLDDGSVEIHAIAEEENLNKFIDAIKKGPSPGCRIEHVYIYKGAPVEDRKTFDIVY.

Positions 5-93 constitute an Acylphosphatase-like domain; that stretch reads TAILRVTGFV…EDRKTFDIVY (89 aa). Residues Arg20 and Asn38 contribute to the active site.

Belongs to the acylphosphatase family.

The catalysed reaction is an acyl phosphate + H2O = a carboxylate + phosphate + H(+). This Listeria welshimeri serovar 6b (strain ATCC 35897 / DSM 20650 / CCUG 15529 / CIP 8149 / NCTC 11857 / SLCC 5334 / V8) protein is Acylphosphatase (acyP).